The primary structure comprises 200 residues: 3-isopropylmalate dehydratase small subunit (200 aa).

This sequence belongs to the LeuD family. LeuD type 1 subfamily. In terms of assembly, heterodimer of LeuC and LeuD.

The catalysed reaction is (2R,3S)-3-isopropylmalate = (2S)-2-isopropylmalate. It participates in amino-acid biosynthesis; L-leucine biosynthesis; L-leucine from 3-methyl-2-oxobutanoate: step 2/4. In terms of biological role, catalyzes the isomerization between 2-isopropylmalate and 3-isopropylmalate, via the formation of 2-isopropylmaleate. The sequence is that of 3-isopropylmalate dehydratase small subunit from Vibrio parahaemolyticus serotype O3:K6 (strain RIMD 2210633).